Reading from the N-terminus, the 441-residue chain is MFS-type transporter (441 aa).

Positions 1-47 (MPPQQEQDTDSDAIRSYNEESKSETPGCIPDAMLSSDETSNDVASDI) are disordered. The next 10 helical transmembrane spans lie at 61-81 (TLCGHFLFMNTWGFINSFGIF), 95-115 (DISWIGSIQVFLSFFVGAFVG), 125-145 (LVLSCGTILVLIGIFTASLST), 150-170 (LILSQGICCGLGNGFLVTPAV), 183-203 (LAIGISTCGSVTGALVFNSMA), 212-232 (FGWTMRAIGFVQAATLLFVVV), 259-279 (FFTIGMFFNFWAVFFGYYYIA), 289-309 (TLTYTQSLNLLLILNGVGVFG), 323-343 (LELLIPTCLVAAVATFSWIAV), and 351-371 (VWTVFYGIIGGSILSLFPAGI). N388 is a glycosylation site (N-linked (GlcNAc...) asparagine). Helical transmembrane passes span 389-409 (FTVISFATLTGNPIAGAIITA) and 415-435 (YGAQAFMGSSFIVGTAFIVAA).

It belongs to the major facilitator superfamily. Monocarboxylate porter (TC 2.A.1.13) family.

Its subcellular location is the membrane. Functionally, MFS-type transporter; part of the gene cluster that mediates the biosynthesis of butenolide, a mycotoxin that shows antibiotic activity but does not seem to play a major role in the spread of head blight in wheat. The polypeptide is MFS-type transporter (Gibberella zeae (strain ATCC MYA-4620 / CBS 123657 / FGSC 9075 / NRRL 31084 / PH-1) (Wheat head blight fungus)).